Here is a 1425-residue protein sequence, read N- to C-terminus: Neuropathy target esterase sws (1425 aa).

Over 1–34 the chain is Lumenal; it reads MDVLEMLRASASGSYNTIFSDAWCQYVSKQITAT. Residues 35–55 traverse the membrane as a helical segment; it reads VYMYFALVMMSLLFIAWFLYF. Residues 56 to 1425 lie on the Cytoplasmic side of the membrane; that stretch reads KRMARLRLRD…RSSPNNETKN (1370 aa). 174 to 301 contributes to the a nucleoside 3',5'-cyclic phosphate binding site; that stretch reads IFGHFEKPVF…IRVIQVIMIR (128 aa). 2 stretches are compositionally biased toward polar residues: residues 332-348 and 357-366; these read TMSG…SRQA and SQMNLMQSAV. The disordered stretch occupies residues 332 to 410; sequence TMSGPINSQT…NPDGSFHGTT (79 aa). Residues 367–381 show a composition bias toward low complexity; it reads SGTGSSGVSVTVTRP. 2 positions are modified to phosphoserine: serine 444 and serine 453. A nucleoside 3',5'-cyclic phosphate contacts are provided by residues 482–609 and 598–727; these read ELGL…VVRR and IVLD…HRFL. The PNPLA domain maps to 952-1118; it reads LVLGGGGARG…VNNLPADVMH (167 aa). Positions 956 to 961 match the GXGXXG motif; that stretch reads GGGARG. The GXSXG motif lies at 983-987; the sequence is GVSIG. The active-site Nucleophile is the serine 985. The Proton acceptor role is filled by aspartate 1105. The DGA/G motif lies at 1105–1107; sequence DGG. Serine 1160 carries the phosphoserine modification. Residues 1330–1425 are disordered; sequence LERKTDKSTQ…RSSPNNETKN (96 aa). The span at 1337 to 1347 shows a compositional bias: low complexity; the sequence is STQSSPPSNSR. Over residues 1348–1358 the composition is skewed to basic and acidic residues; that stretch reads SDMRGKEEARH. A compositionally biased stretch (low complexity) spans 1380 to 1403; it reads TKTQTGQEQELQQEQQDQGATAEQ. The span at 1404-1416 shows a compositional bias: basic and acidic residues; that stretch reads LVDKDKEENKENR.

It belongs to the NTE family. Interacts with Pka-C3; interaction inhibits the catalytic function of Pka-C3 and the esterase activity of sws. Isoform A and isoform B are expressed in the entire brain cortex; cortical cell bodies of adult brain. Sws and Pka-C3 are colocalized in all neurons.

The protein localises to the endoplasmic reticulum membrane. The enzyme catalyses a 1-acyl-sn-glycero-3-phosphocholine + H2O = sn-glycerol 3-phosphocholine + a fatty acid + H(+). Functionally, phospholipase B that deacylates intracellular phosphatidylcholine (PtdCho), generating glycerophosphocholine (GroPtdCho). This deacylation occurs at both sn-2 and sn-1 positions of PtdCho. Its specific chemical modification by certain organophosphorus (OP) compounds leads to distal axonopathy. Plays a role in the signaling mechanism between neurons and glia that regulates glia wrapping during development of the adult brain. Essential for membrane lipid homeostasis and cell survival in both neurons and glia of the adult brain. In Drosophila melanogaster (Fruit fly), this protein is Neuropathy target esterase sws (sws).